A 592-amino-acid polypeptide reads, in one-letter code: Hepatocyte nuclear factor 1-alpha-B (592 aa).

The dimerization stretch occupies residues methionine 1–alanine 31. The HNF-p1 domain maps to methionine 1 to aspartate 32. The tract at residues asparagine 54–aspartate 78 is disordered. A compositionally biased stretch (acidic residues) spans methionine 67 to glycine 77. The POU-specific atypical domain occupies lysine 85–histidine 180. 6 interaction with DNA regions span residues glutamine 128–glutamate 130, histidine 141–asparagine 147, lysine 153–lysine 156, arginine 201–tryptophan 204, arginine 261–tyrosine 263, and asparagine 268–lysine 271. A Nuclear localization signal motif is present at residues lysine 195 to lysine 203. The segment at residues methionine 197–histidine 277 is a DNA-binding region (homeobox; HNF1-type). Polar residues-rich tracts occupy residues tyrosine 284–serine 295 and arginine 306–proline 328. Disordered regions lie at residues tyrosine 284–serine 329 and lysine 511–aspartate 533.

Belongs to the HNF1 homeobox family. In terms of assembly, binds DNA as dimer. Forms a homodimer or heterodimer with HNF1-alpha-A. Potentially also form a heterodimer with HNF1-beta. As to expression, liver.

Its subcellular location is the nucleus. Its function is as follows. Transcriptional activator that regulates the tissue specific expression of multiple genes, especially in pancreas and liver. Binds to the hepatocyte specific promoter element HP1. Binds to the inverted palindrome 5'-GTTAATNATTAAC-3'. The protein is Hepatocyte nuclear factor 1-alpha-B (hnf1a-b) of Xenopus laevis (African clawed frog).